The sequence spans 395 residues: L-methionine gamma-lyase (395 aa).

Pyridoxal 5'-phosphate contacts are provided by residues 56-58 and 86-87; these read YTR and GM. Position 111 (tyrosine 111) interacts with substrate. Pyridoxal 5'-phosphate is bound at residue 206–208; the sequence is SAT. N6-(pyridoxal phosphate)lysine is present on lysine 209. Arginine 373 lines the substrate pocket.

The protein belongs to the trans-sulfuration enzymes family. L-methionine gamma-lyase subfamily. As to quaternary structure, homotetramer. Pyridoxal 5'-phosphate serves as cofactor.

The enzyme catalyses L-methionine + H2O = methanethiol + 2-oxobutanoate + NH4(+). The catalysed reaction is L-homocysteine + H2O = 2-oxobutanoate + hydrogen sulfide + NH4(+) + H(+). It catalyses the reaction L-cysteine + H2O = hydrogen sulfide + pyruvate + NH4(+) + H(+). In terms of biological role, catalyzes the alpha,gamma-elimination of L-methionine to produce methanethiol, 2-oxobutanoate and ammonia, and that of L-homocysteine. Can also use L-cysteine as substrate, catalyzing its alpha,beta-elimination; this activity seems to only minimally contribute to the production of hydrogen sulfide (H2S) by F.nucleatum in the oral cavity, which is toxic for a large variety of cells in periodontal regions. The chain is L-methionine gamma-lyase from Fusobacterium nucleatum subsp. nucleatum (strain ATCC 25586 / DSM 15643 / BCRC 10681 / CIP 101130 / JCM 8532 / KCTC 2640 / LMG 13131 / VPI 4355).